The chain runs to 74 residues: UPF0154 protein LSL_0542 (74 aa).

Residues 5–25 traverse the membrane as a helical segment; sequence IWVLIVIIAAVLGFVGGFFAA.

The protein belongs to the UPF0154 family.

It localises to the cell membrane. In Ligilactobacillus salivarius (strain UCC118) (Lactobacillus salivarius), this protein is UPF0154 protein LSL_0542.